The chain runs to 166 residues: Monodehydroascorbate reductase, fruit isozyme (166 aa).

It belongs to the FAD-dependent oxidoreductase family. FAD serves as cofactor. The N-terminus is blocked.

It carries out the reaction 2 monodehydro-L-ascorbate radical + NADH + H(+) = 2 L-ascorbate + NAD(+). In terms of biological role, catalyzes the conversion of monodehydroascorbate to ascorbate, oxidizing NADH in the process. This is Monodehydroascorbate reductase, fruit isozyme from Cucumis sativus (Cucumber).